Consider the following 521-residue polypeptide: NAD(P)H-quinone oxidoreductase subunit 2 (521 aa).

A run of 14 helical transmembrane segments spans residues 15–35 (ILPE…DITF), 42–62 (WTPY…YTQW), 79–99 (LSIV…LMSV), 109–126 (IGEF…AMFL), 131–153 (ELVM…TGYM), 167–187 (LLIG…LYGL), 208–228 (LALV…IAAV), 242–262 (PTPV…ALAI), 276–296 (WQFI…VVAI), 304–324 (MLAY…VIGT), 332–352 (VFYL…VILF), 376–396 (LALS…GFFG), 398–418 (LYLF…LGLI), and 464–484 (VGLV…NPLL).

It belongs to the complex I subunit 2 family. NDH-1 can be composed of about 15 different subunits; different subcomplexes with different compositions have been identified which probably have different functions.

Its subcellular location is the cellular thylakoid membrane. It catalyses the reaction a plastoquinone + NADH + (n+1) H(+)(in) = a plastoquinol + NAD(+) + n H(+)(out). The catalysed reaction is a plastoquinone + NADPH + (n+1) H(+)(in) = a plastoquinol + NADP(+) + n H(+)(out). NDH-1 shuttles electrons from an unknown electron donor, via FMN and iron-sulfur (Fe-S) centers, to quinones in the respiratory and/or the photosynthetic chain. The immediate electron acceptor for the enzyme in this species is believed to be plastoquinone. Couples the redox reaction to proton translocation, and thus conserves the redox energy in a proton gradient. Cyanobacterial NDH-1 also plays a role in inorganic carbon-concentration. The sequence is that of NAD(P)H-quinone oxidoreductase subunit 2 from Acaryochloris marina (strain MBIC 11017).